The sequence spans 617 residues: Dihydroxy-acid dehydratase (617 aa).

Aspartate 81 is a binding site for Mg(2+). Cysteine 122 serves as a coordination point for [2Fe-2S] cluster. Positions 123 and 124 each coordinate Mg(2+). N6-carboxylysine is present on lysine 124. Cysteine 195 serves as a coordination point for [2Fe-2S] cluster. Glutamate 492 is a Mg(2+) binding site. Serine 518 serves as the catalytic Proton acceptor.

It belongs to the IlvD/Edd family. Homodimer. Requires [2Fe-2S] cluster as cofactor. The cofactor is Mg(2+).

It carries out the reaction (2R)-2,3-dihydroxy-3-methylbutanoate = 3-methyl-2-oxobutanoate + H2O. It catalyses the reaction (2R,3R)-2,3-dihydroxy-3-methylpentanoate = (S)-3-methyl-2-oxopentanoate + H2O. It participates in amino-acid biosynthesis; L-isoleucine biosynthesis; L-isoleucine from 2-oxobutanoate: step 3/4. It functions in the pathway amino-acid biosynthesis; L-valine biosynthesis; L-valine from pyruvate: step 3/4. Functions in the biosynthesis of branched-chain amino acids. Catalyzes the dehydration of (2R,3R)-2,3-dihydroxy-3-methylpentanoate (2,3-dihydroxy-3-methylvalerate) into 2-oxo-3-methylpentanoate (2-oxo-3-methylvalerate) and of (2R)-2,3-dihydroxy-3-methylbutanoate (2,3-dihydroxyisovalerate) into 2-oxo-3-methylbutanoate (2-oxoisovalerate), the penultimate precursor to L-isoleucine and L-valine, respectively. The polypeptide is Dihydroxy-acid dehydratase (Buchnera aphidicola subsp. Cinara cedri (strain Cc)).